The sequence spans 237 residues: Cytosolic-abundant heat soluble protein 1 (237 aa).

Composition is skewed to basic and acidic residues over residues 1–17 and 91–105; these read MPYEKHVEQTVVEKTEQ and VDMRPSPKLAEEARR. Disordered regions lie at residues 1–35 and 85–105; these read MPYEKHVEQTVVEKTEQPGHSSTHHAPAQRTVARE and SGASTEVDMRPSPKLAEEARR. Positions 98 to 201 form a coiled coil; it reads KLAEEARRDA…KEALERSRMA (104 aa). CAHS motif regions lie at residues 132–150 and 169–187; these read YRHQTEAEAEKIRRELEKQ and QKREVDLEAKMAKRELDRE. Residues 212–237 form a disordered region; sequence AGHTVSGGTTVSSVDKVETVRERKHH. A compositionally biased stretch (basic and acidic residues) spans 226 to 237; the sequence is DKVETVRERKHH.

This sequence belongs to the Cytosolic-abundant heat soluble protein (CAHS) family.

The protein resides in the cytoplasm. It is found in the nucleus. CAHS proteins are cytosolic heat soluble proteins that seem to contribute to the anhydrobiosis in tardigrades, but their specific mechanisms are yet to be identified. It is possible that protection during anhydrobiosis might occur via the stabilization of vitrifying small molecules such as sugars, but not via the direct glass transition of CAHS proteins themselves. The chain is Cytosolic-abundant heat soluble protein 1 from Ramazzottius varieornatus (Water bear).